We begin with the raw amino-acid sequence, 1337 residues long: ATP-dependent helicase/nuclease subunit A (1337 aa).

A UvrD-like helicase ATP-binding domain is found at 3 to 484; that stretch reads FTPSKEQEPA…LDLSDNYRSR (482 aa). 24–31 provides a ligand contact to ATP; the sequence is ASAGSGKT. The 346-residue stretch at 522–867 folds into the UvrD-like helicase C-terminal domain; sequence ADRDQASPAT…NVMTIHKSKG (346 aa).

Belongs to the helicase family. AddA subfamily. In terms of assembly, heterodimer of AddA and AddB/RexB. The cofactor is Mg(2+).

The enzyme catalyses Couples ATP hydrolysis with the unwinding of duplex DNA by translocating in the 3'-5' direction.. It carries out the reaction ATP + H2O = ADP + phosphate + H(+). The heterodimer acts as both an ATP-dependent DNA helicase and an ATP-dependent, dual-direction single-stranded exonuclease. Recognizes the chi site generating a DNA molecule suitable for the initiation of homologous recombination. The AddA nuclease domain is required for chi fragment generation; this subunit has the helicase and 3' -&gt; 5' nuclease activities. This Limosilactobacillus fermentum (strain NBRC 3956 / LMG 18251) (Lactobacillus fermentum) protein is ATP-dependent helicase/nuclease subunit A.